We begin with the raw amino-acid sequence, 347 residues long: NADH-ubiquinone oxidoreductase chain 2 (347 aa).

A run of 11 helical transmembrane segments spans residues 3 to 23 (PLIL…VMMS), 25 to 45 (HWLM…PLLM), 59 to 79 (YFLT…INLM), 96 to 116 (IIMT…FWVP), 122 to 142 (ISLT…LSIL), 148 to 168 (VINP…GGWG), 178 to 198 (ILAY…AFNP), 202 to 222 (LLNL…FMVA), 240 to 260 (ITTS…LAGF), 276 to 296 (IILA…YIRL), and 326 to 346 (LPPL…MILL).

The protein belongs to the complex I subunit 2 family. In terms of assembly, core subunit of respiratory chain NADH dehydrogenase (Complex I) which is composed of 45 different subunits. Interacts with TMEM242.

It localises to the mitochondrion inner membrane. It catalyses the reaction a ubiquinone + NADH + 5 H(+)(in) = a ubiquinol + NAD(+) + 4 H(+)(out). In terms of biological role, core subunit of the mitochondrial membrane respiratory chain NADH dehydrogenase (Complex I) which catalyzes electron transfer from NADH through the respiratory chain, using ubiquinone as an electron acceptor. Essential for the catalytic activity and assembly of complex I. This chain is NADH-ubiquinone oxidoreductase chain 2, found in Peropteryx kappleri (Greater dog-like bat).